A 249-amino-acid chain; its full sequence is Ribonuclease HII (249 aa).

Residues 1–19 are compositionally biased toward pro residues; it reads MAPRPKAPPQPAEPDPALP. Residues 1–31 are disordered; the sequence is MAPRPKAPPQPAEPDPALPRPRGRPPKAGAV. The region spanning 52-240 is the RNase H type-2 domain; the sequence is APVAGADEVG…VREQQLGLFP (189 aa). Aspartate 58, glutamate 59, and aspartate 149 together coordinate a divalent metal cation.

The protein belongs to the RNase HII family. It depends on Mn(2+) as a cofactor. Mg(2+) is required as a cofactor.

The protein localises to the cytoplasm. It catalyses the reaction Endonucleolytic cleavage to 5'-phosphomonoester.. Endonuclease that specifically degrades the RNA of RNA-DNA hybrids. In Xanthobacter autotrophicus (strain ATCC BAA-1158 / Py2), this protein is Ribonuclease HII.